Consider the following 89-residue polypeptide: Myrmicitoxin(1)-Pm2a (89 aa).

Residues 1 to 22 (MEIPKLLYIAVIAIGLSGSLTC) form the signal peptide. Positions 23-61 (ATPLANPWGDPEAEANPEAKATAEATAEAIAEALAEPEP) are excised as a propeptide. Asparagine 88 carries the post-translational modification Asparagine amide.

Belongs to the formicidae venom clade 1 family. Expressed by the venom gland.

It is found in the secreted. Functionally, toxin that potently modulates mammalian voltage-gated sodium (Nav) channels, reducing the voltage threshold for activation and inhibiting channel inactivation. Shows activity on hNav1.6/SCN8A (EC(50)=176 nM), mNav1.7/SCN9A (EC(50)=102 nM) and hNav1.7 (EC(50)=154 nM). In vivo, causes spontaneous, gradual and long-lasting nocifensive behaviors by intraplantar injection in mice, as well as pronounced swelling of the injected paw. Does not have effect on insects (blowflies). The sequence is that of Myrmicitoxin(1)-Pm2a from Pogonomyrmex maricopa (Maricopa harvester ant).